Here is a 197-residue protein sequence, read N- to C-terminus: Lipid A acyltransferase PagP (197 aa).

Positions 1–24 are cleaved as a signal peptide; that stretch reads MMFFKRTILACTVALLFPALPSYA. Residues histidine 69, aspartate 112, and serine 113 contribute to the active site.

The protein belongs to the lipid A palmitoyltransferase family. In terms of assembly, homodimer.

The protein resides in the cell outer membrane. It catalyses the reaction a lipid A + a 1,2-diacyl-sn-glycero-3-phosphocholine = a hepta-acyl lipid A + a 2-acyl-sn-glycero-3-phosphocholine. It carries out the reaction a lipid IVA + a 1,2-diacyl-sn-glycero-3-phosphocholine = a lipid IVB + a 2-acyl-sn-glycero-3-phosphocholine. The catalysed reaction is a lipid IIA + a 1,2-diacyl-sn-glycero-3-phosphocholine = a lipid IIB + a 2-acyl-sn-glycero-3-phosphocholine. Functionally, transfers a fatty acid residue from the sn-1 position of a phospholipid to the N-linked hydroxyfatty acid chain on the proximal unit of lipid A or its precursors. The polypeptide is Lipid A acyltransferase PagP (Serratia proteamaculans (strain 568)).